A 248-amino-acid chain; its full sequence is PF03932 family protein CutC (248 aa).

The protein belongs to the CutC family. In terms of assembly, homodimer.

Its subcellular location is the cytoplasm. The protein is PF03932 family protein CutC of Salmonella heidelberg (strain SL476).